We begin with the raw amino-acid sequence, 115 residues long: Large ribosomal subunit protein bL19 (115 aa).

Belongs to the bacterial ribosomal protein bL19 family.

This protein is located at the 30S-50S ribosomal subunit interface and may play a role in the structure and function of the aminoacyl-tRNA binding site. The chain is Large ribosomal subunit protein bL19 from Finegoldia magna (strain ATCC 29328 / DSM 20472 / WAL 2508) (Peptostreptococcus magnus).